The sequence spans 462 residues: MAPGRAVAGLLLLAATGLGRPSEGPELAFTEDVLRVFGANQSLSAAQLGRLLERLGAAPQQGALELGQLHFNQCLSAEDIFSLHGFSNVTQITSSNFTAICPAILQQLNFHPCEDPQKHSVKPSFSEVWGYGFLSVTIINLASLLGLILTPLIKKSYFPKILTYFVGLAIGTLFSNAIFQLIPEAFGFNPKIDNYVEKAVAVFGGFYMLFFVERTLKMLLKTYGQNDHTHFRNDDFGSKEKAHQPKTLPLPPVNGVTCYANPAVTEPNGHIHFDTVSVVSLQDGKAESSSCTCLKGPKLSEIGTIAWMITLCDALHNFIDGLAIGASYTLSLLQGLSTSIAILCEEFPHELGDFVILLNAGMSTRQALLFNFLSACSCYVGLAFGILVGNNFAPNIIFALAGGMFLYISLADMFPEMNDMLREKVTGRQTDFTFFMIQNAGMLTGFTAILLITLYAGDIELQ.

An N-terminal signal peptide occupies residues 1–19 (MAPGRAVAGLLLLAATGLG). At 20-132 (RPSEGPELAF…PSFSEVWGYG (113 aa)) the chain is on the extracellular side. N-linked (GlcNAc...) asparagine glycans are attached at residues asparagine 40, asparagine 88, and asparagine 96. Residues 133-153 (FLSVTIINLASLLGLILTPLI) traverse the membrane as a helical segment. The Cytoplasmic segment spans residues 154 to 160 (KKSYFPK). Residues 161–181 (ILTYFVGLAIGTLFSNAIFQL) form a helical membrane-spanning segment. Residues 182–191 (IPEAFGFNPK) lie on the Extracellular side of the membrane. Residues 192–212 (IDNYVEKAVAVFGGFYMLFFV) form a helical membrane-spanning segment. At 213 to 367 (ERTLKMLLKT…LNAGMSTRQA (155 aa)) the chain is on the cytoplasmic side. Positions 345–350 (EEFPHE) match the XEXPHE-motif motif. A helical transmembrane segment spans residues 368–388 (LLFNFLSACSCYVGLAFGILV). The Extracellular segment spans residues 389–390 (GN). A helical membrane pass occupies residues 391–411 (NFAPNIIFALAGGMFLYISLA). Residues 412 to 431 (DMFPEMNDMLREKVTGRQTD) lie on the Cytoplasmic side of the membrane. Residues 432–452 (FTFFMIQNAGMLTGFTAILLI) traverse the membrane as a helical segment. At 453–462 (TLYAGDIELQ) the chain is on the extracellular side.

This sequence belongs to the ZIP transporter (TC 2.A.5) family. As to quaternary structure, homodimer. Post-translationally, N-glycosylated. N-glycosylation is not required for proper iron and zinc transport.

The protein resides in the cell membrane. It localises to the lysosome membrane. Its subcellular location is the apical cell membrane. The protein localises to the basolateral cell membrane. The catalysed reaction is Zn(2+)(out) + 2 hydrogencarbonate(out) = Zn(2+)(in) + 2 hydrogencarbonate(in). The enzyme catalyses selenite(out) + Zn(2+)(out) + hydrogencarbonate(out) = selenite(in) + Zn(2+)(in) + hydrogencarbonate(in). It carries out the reaction Mn(2+)(out) + 2 hydrogencarbonate(out) = Mn(2+)(in) + 2 hydrogencarbonate(in). It catalyses the reaction Fe(2+)(out) + 2 hydrogencarbonate(out) = Fe(2+)(in) + 2 hydrogencarbonate(in). The catalysed reaction is Cd(2+)(out) + 2 hydrogencarbonate(out) = Cd(2+)(in) + 2 hydrogencarbonate(in). The enzyme catalyses Co(2+)(out) + 2 hydrogencarbonate(out) = Co(2+)(in) + 2 hydrogencarbonate(in). Its function is as follows. Electroneutral divalent metal cation:bicarbonate symporter of the plasma membrane mediating the cellular uptake of zinc and manganese, two divalent metal cations important for development, tissue homeostasis and immunity. Transports an electroneutral complex composed of a divalent metal cation and two bicarbonate anions or alternatively a bicarbonate and a selenite anion. Thereby, it also contributes to the cellular uptake of selenium, an essential trace metal and micronutrient. Also imports cadmium a non-essential metal which is cytotoxic and carcinogenic. May also transport iron and cobalt through membranes. Through zinc import, indirectly regulates the metal-dependent transcription factor MTF1 and the expression of some metalloproteases involved in cartilage catabolism and also probably heart development. Also indirectly regulates the expression of proteins involved in cell morphology and cytoskeleton organization. Indirectly controls innate immune function and inflammatory response by regulating zinc cellular uptake which in turn modulates the expression of genes specific of these processes. Protects, for instance, cells from injury and death at the onset of inflammation. By regulating zinc influx into monocytes also directly modulates their adhesion to endothelial cells and arteries. Reclaims manganese from the bile at the apical membrane of hepatocytes, thereby regulating the activity of the manganese-dependent enzymes through the systemic levels of the nutrient. Also participates in manganese reabsorption in the proximal tubule of the kidney. By mediating the extracellular uptake of manganese by cells of the blood-brain barrier, may also play a role in the transport of the micronutrient to the brain. With manganese cellular uptake also participates in mitochondrial proper function. Finally, also probably functions intracellularly, translocating zinc from lysosome to cytosol to indirectly enhance the expression of specific genes during TCR-mediated T cell activation. In Rattus norvegicus (Rat), this protein is Metal cation symporter ZIP8.